We begin with the raw amino-acid sequence, 474 residues long: H/ACA ribonucleoprotein complex subunit cbf5 (474 aa).

The active-site Nucleophile is the aspartate 100. Positions 271-346 (YKRIVVKDSA…VVAKVKRCIM (76 aa)) constitute a PUA domain. 2 disordered regions span residues 361–391 (SMKKKTLKKEGKLDKYGRPNENTPADWSKSY) and 406–474 (PVVA…KKSE). A compositionally biased stretch (basic and acidic residues) spans 368–378 (KKEGKLDKYGR). Residues 406-419 (PVVAPAAPTVEAEV) show a composition bias toward low complexity. The segment covering 423 to 434 (EDSKKRKSVESS) has biased composition (basic and acidic residues). A 7 X 3 AA approximate tandem repeats of K-K-E region spans residues 434–468 (SEKDEDEAAKKEEKRRKKEAKKEKKEKKEKKEKKE). Repeat copies occupy residues 443–445 (KKE), 450–452 (KKE), 454–456 (KKE), 457–459 (KKE), 460–462 (KKE), 463–465 (KKE), and 466–468 (KKE). Residues 446 to 474 (EKRRKKEAKKEKKEKKEKKEKKEKKKKSE) are compositionally biased toward basic residues.

This sequence belongs to the pseudouridine synthase TruB family. In terms of assembly, component of the small nucleolar ribonucleoprotein particles containing H/ACA-type snoRNAs (H/ACA snoRNPs).

The protein resides in the nucleus. Its subcellular location is the nucleolus. It carries out the reaction uridine in 5S rRNA = pseudouridine in 5S rRNA. It catalyses the reaction uridine in snRNA = pseudouridine in snRNA. The catalysed reaction is a uridine in mRNA = a pseudouridine in mRNA. In terms of biological role, catalytic subunit of H/ACA small nucleolar ribonucleoprotein (H/ACA snoRNP) complex, which catalyzes pseudouridylation of rRNA. This involves the isomerization of uridine such that the ribose is subsequently attached to C5, instead of the normal N1. Pseudouridine ('psi') residues may serve to stabilize the conformation of rRNAs and play a central role in ribosomal RNA processing. The H/ACA snoRNP complex also mediates pseudouridylation of other types of RNAs. Catalyzes pseudouridylation at position 93 in U2 snRNA. Also catalyzes pseudouridylation of mRNAs; H/ACA-type snoRNAs probably guide pseudouridylation of mRNAs. The sequence is that of H/ACA ribonucleoprotein complex subunit cbf5 (cbf5) from Schizosaccharomyces pombe (strain 972 / ATCC 24843) (Fission yeast).